Here is a 238-residue protein sequence, read N- to C-terminus: Thiamine import ATP-binding protein ThiQ (238 aa).

Positions 1 to 234 (MSSTALAVKG…RDIAAINRFL (234 aa)) constitute an ABC transporter domain. An ATP-binding site is contributed by 36-43 (GASGSGKS).

Belongs to the ABC transporter superfamily. Thiamine importer (TC 3.A.1.19.1) family. The complex is composed of two ATP-binding proteins (ThiQ), two transmembrane proteins (ThiP) and a solute-binding protein (ThiB).

It is found in the cell inner membrane. It carries out the reaction thiamine(out) + ATP + H2O = thiamine(in) + ADP + phosphate + H(+). Part of the ABC transporter complex ThiBPQ involved in thiamine import. Responsible for energy coupling to the transport system. The protein is Thiamine import ATP-binding protein ThiQ of Rhizobium meliloti (strain 1021) (Ensifer meliloti).